A 329-amino-acid chain; its full sequence is Phenylalanine--tRNA ligase alpha subunit (329 aa).

Position 254 (E254) interacts with Mg(2+).

Belongs to the class-II aminoacyl-tRNA synthetase family. Phe-tRNA synthetase alpha subunit type 1 subfamily. In terms of assembly, tetramer of two alpha and two beta subunits. It depends on Mg(2+) as a cofactor.

It localises to the cytoplasm. It catalyses the reaction tRNA(Phe) + L-phenylalanine + ATP = L-phenylalanyl-tRNA(Phe) + AMP + diphosphate + H(+). In Histophilus somni (strain 129Pt) (Haemophilus somnus), this protein is Phenylalanine--tRNA ligase alpha subunit.